A 184-amino-acid chain; its full sequence is ATP synthase subunit b, chloroplastic (184 aa).

The chain crosses the membrane as a helical span at residues 29-49 (INLINLILVLGILFYYGKGVL).

Belongs to the ATPase B chain family. F-type ATPases have 2 components, F(1) - the catalytic core - and F(0) - the membrane proton channel. F(1) has five subunits: alpha(3), beta(3), gamma(1), delta(1), epsilon(1). F(0) has four main subunits: a(1), b(1), b'(1) and c(10-14). The alpha and beta chains form an alternating ring which encloses part of the gamma chain. F(1) is attached to F(0) by a central stalk formed by the gamma and epsilon chains, while a peripheral stalk is formed by the delta, b and b' chains.

It is found in the plastid. The protein resides in the chloroplast thylakoid membrane. Functionally, f(1)F(0) ATP synthase produces ATP from ADP in the presence of a proton or sodium gradient. F-type ATPases consist of two structural domains, F(1) containing the extramembraneous catalytic core and F(0) containing the membrane proton channel, linked together by a central stalk and a peripheral stalk. During catalysis, ATP synthesis in the catalytic domain of F(1) is coupled via a rotary mechanism of the central stalk subunits to proton translocation. Its function is as follows. Component of the F(0) channel, it forms part of the peripheral stalk, linking F(1) to F(0). This is ATP synthase subunit b, chloroplastic from Adiantum capillus-veneris (Maidenhair fern).